The sequence spans 332 residues: Alpha-N-acetylgalactosaminide alpha-2,6-sialyltransferase 6 (332 aa).

Residues 1–26 form a disordered region; that stretch reads MACPRPLSQCDHTPLPGPPAGHWPLP. At 1-42 the chain is on the cytoplasmic side; that stretch reads MACPRPLSQCDHTPLPGPPAGHWPLPLSRRRREMKSNKEQRS. The helical; Signal-anchor for type II membrane protein transmembrane segment at 43–63 threads the bilayer; sequence AVFVILFALITILILYSSSSA. At 64-332 the chain is on the lumenal side; the sequence is NEVFHYGSLR…GITFSHPSWT (269 aa). N97 carries N-linked (GlcNAc...) asparagine glycosylation. C107 and C255 form a disulfide bridge.

The protein belongs to the glycosyltransferase 29 family.

The protein resides in the golgi apparatus membrane. The enzyme catalyses a ganglioside GM1b (d18:1(4E)) + CMP-N-acetyl-beta-neuraminate = a ganglioside GD1alpha (d18:1(4E)) + CMP + H(+). It carries out the reaction N-acetyl-alpha-neuraminosyl-(2-&gt;3)-beta-D-galactosyl-(1-&gt;3)-N-acetyl-beta-D-glucosaminyl-(1-&gt;3)-beta-D-galactosyl-(1-&gt;4)-beta-D-glucosyl-(1&lt;-&gt;1')-N-acyl-sphing-4-enine + CMP-N-acetyl-beta-neuraminate = N-acetyl-alpha-neuraminosyl-(2-&gt;3)-beta-D-galactosyl-(1-&gt;3)-[N-acetyl-alpha-neuraminosyl-(2-&gt;6)]-N-acetyl-beta-D-glucosaminyl-(1-&gt;3)-beta-D-galactosyl-(1-&gt;4)-beta-D-glucosyl-(1&lt;-&gt;1')-N-acyl-sphing-4-enine + CMP + H(+). It catalyses the reaction a globoside MSGG + CMP-N-acetyl-beta-neuraminate = a globoside DSGG + CMP + H(+). The catalysed reaction is a ganglioside GD1a (d18:1(4E)) + CMP-N-acetyl-beta-neuraminate = a ganglioside GT1aalpha (d18:1(4E)) + CMP + H(+). The enzyme catalyses a ganglioside GT1b (d18:1(4E)) + CMP-N-acetyl-beta-neuraminate = a ganglioside GQ1balpha (d18:1(4E)) + CMP + H(+). It carries out the reaction 3-O-[alpha-Neu5Ac-(2-&gt;3)-beta-D-Gal-(1-&gt;3)-alpha-D-GalNAc]-L-Ser-[protein] + CMP-N-acetyl-beta-neuraminate = a 3-O-{alpha-Neu5Ac-(2-&gt;3)-beta-D-Gal-(1-&gt;3)-[alpha-Neu5Ac-(2-&gt;6)]-alpha-D-GalNAc}-L-seryl-[protein] + CMP + H(+). It catalyses the reaction 3-O-[alpha-Neu5Ac-(2-&gt;3)-beta-D-Gal-(1-&gt;3)-alpha-D-GalNAc]-L-Thr-[protein] + CMP-N-acetyl-beta-neuraminate = a 3-O-{alpha-Neu5Ac-(2-&gt;3)-beta-D-Gal-(1-&gt;3)-[alpha-Neu5Ac-(2-&gt;6)]-alpha-D-GalNAc}-L-threonyl-[protein] + CMP + H(+). In terms of biological role, transfers the sialyl group (N-acetyl-alpha-neuraminyl or NeuAc) from CMP-NeuAc onto glycoproteins and glycolipids, forming an alpha-2,6-linkage. Produces branched type disialyl structures by transfer of a sialyl group onto the GalNAc or GlcNAc residue inside backbone core chains having a terminal sialic acid with an alpha-2,3-linkage on Gal. ST6GalNAcVI prefers glycolipids to glycoproteins, predominantly catalyzing the biosynthesis of ganglioside GD1alpha from GM1b. Besides GMb1, MSGG and other glycolipids, it shows activity towards sialyl Lc4Cer generating disialyl Lc4Cer, which can lead to the synthesis of disialyl Lewis a (Le(a)), suggested to be a cancer-associated antigen. Also has activity toward GD1a and GT1b, and can generate DSGG (disialylgalactosylgloboside) from MSGG (monosialylgalactosylgloboside). The chain is Alpha-N-acetylgalactosaminide alpha-2,6-sialyltransferase 6 (ST6GALNAC6) from Bos taurus (Bovine).